The chain runs to 412 residues: Serine hydroxymethyltransferase (412 aa).

(6S)-5,6,7,8-tetrahydrofolate contacts are provided by residues leucine 112 and 116–118 (GHL). N6-(pyridoxal phosphate)lysine is present on lysine 221. Residue glutamate 237 coordinates (6S)-5,6,7,8-tetrahydrofolate.

This sequence belongs to the SHMT family. As to quaternary structure, homodimer. The cofactor is pyridoxal 5'-phosphate.

The protein resides in the cytoplasm. It catalyses the reaction (6R)-5,10-methylene-5,6,7,8-tetrahydrofolate + glycine + H2O = (6S)-5,6,7,8-tetrahydrofolate + L-serine. The protein operates within one-carbon metabolism; tetrahydrofolate interconversion. Its pathway is amino-acid biosynthesis; glycine biosynthesis; glycine from L-serine: step 1/1. Functionally, catalyzes the reversible interconversion of serine and glycine with tetrahydrofolate (THF) serving as the one-carbon carrier. This reaction serves as the major source of one-carbon groups required for the biosynthesis of purines, thymidylate, methionine, and other important biomolecules. Also exhibits THF-independent aldolase activity toward beta-hydroxyamino acids, producing glycine and aldehydes, via a retro-aldol mechanism. The sequence is that of Serine hydroxymethyltransferase from Malacoplasma penetrans (strain HF-2) (Mycoplasma penetrans).